Consider the following 198-residue polypeptide: V-type proton ATPase subunit E (198 aa).

This sequence belongs to the V-ATPase E subunit family.

Functionally, produces ATP from ADP in the presence of a proton gradient across the membrane. This chain is V-type proton ATPase subunit E, found in Borrelia turicatae (strain 91E135).